The following is a 226-amino-acid chain: Ribonuclease 3 (226 aa).

Positions 6-128 constitute an RNase III domain; the sequence is TKKIQKVLGY…LIGSIYLDSN (123 aa). Glu-41 provides a ligand contact to Mg(2+). The active site involves Asp-45. Residues Asn-114 and Glu-117 each contribute to the Mg(2+) site. Glu-117 is an active-site residue. A DRBM domain is found at 155–225; sequence DPKTRLQEYL…AQKALIKLGV (71 aa).

This sequence belongs to the ribonuclease III family. In terms of assembly, homodimer. Mg(2+) serves as cofactor.

Its subcellular location is the cytoplasm. The catalysed reaction is Endonucleolytic cleavage to 5'-phosphomonoester.. Functionally, digests double-stranded RNA. Involved in the processing of primary rRNA transcript to yield the immediate precursors to the large and small rRNAs (23S and 16S). Processes some mRNAs, and tRNAs when they are encoded in the rRNA operon. Processes pre-crRNA and tracrRNA of type II CRISPR loci if present in the organism. The sequence is that of Ribonuclease 3 from Buchnera aphidicola subsp. Acyrthosiphon pisum (strain 5A).